A 95-amino-acid polypeptide reads, in one-letter code: Small ubiquitin-related modifier 2 (95 aa).

Methionine 1 is covalently cross-linked (Peptide (Met-Gly) (interchain with G-Cter in ubiquitin)). Residues lysine 5 and lysine 7 each participate in a glycyl lysine isopeptide (Lys-Gly) (interchain with G-Cter in SUMO2) cross-link. The residue at position 11 (lysine 11) is an N6-acetyllysine; alternate. A Glycyl lysine isopeptide (Lys-Gly) (interchain with G-Cter in SUMO); alternate cross-link involves residue lysine 11. Lysine 11 is covalently cross-linked (Glycyl lysine isopeptide (Lys-Gly) (interchain with G-Cter in SUMO1); alternate). A Glycyl lysine isopeptide (Lys-Gly) (interchain with G-Cter in SUMO2); alternate cross-link involves residue lysine 11. A Glycyl lysine isopeptide (Lys-Gly) (interchain with G-Cter in ubiquitin); alternate cross-link involves residue lysine 11. Positions 16 to 95 (DHINLKVAGQ…VFQQQTGGVY (80 aa)) constitute a Ubiquitin-like domain. Residue lysine 21 forms a Glycyl lysine isopeptide (Lys-Gly) (interchain with G-Cter in SUMO2) linkage. Residue glycine 93 forms a Glycyl lysine isopeptide (Gly-Lys) (interchain with K-? in acceptor proteins) linkage. Residues 94–95 (VY) constitute a propeptide that is removed on maturation.

Belongs to the ubiquitin family. SUMO subfamily. As to quaternary structure, interacts with SAE2 and UBE2I. Interacts with ZNF451. Identified in a complex with ZNF451 and UBE2I/UBC9, where one ZNF451 interacts with one UBE2I/UBC9 and two SUMO2 chains, one bound to the UBE2I/UBC9 active site and the other to another region of the same UBE2I/UBC9 molecule. Covalently attached to a number of proteins. Interacts with PELP1. Interacts with USP25; the interaction sumoylates USP25. Interacts with SIMC1, CASP8AP2, RNF111 and SOBP (via SIM domains). Interacts with MTA1. Interacts with HINT1. Interacts with GCNA (via SIM domains); this interaction allows the GCNA recruitment to DPCs sites. Post-translationally, polymeric chains can be formed through Lys-11 cross-linking. Polymeric SUMO2 chains undergo 'Lys-6'-, 'Lys-11'-, 'Lys-48'- and 'Lys-63'-linked polyubiquitination by RNF4. Cleavage of precursor form by SENP1 or SENP2 is necessary for function. In terms of processing, monoubiquitinated N-terminally by UBE2W, which primes it for RNF4-dependent polyubiquitination by the UBE2V1-UBE2N heterodimer.

It localises to the nucleus. The protein resides in the PML body. Ubiquitin-like protein that can be covalently attached to proteins as a monomer or as a lysine-linked polymer. Covalent attachment via an isopeptide bond to its substrates requires prior activation by the E1 complex SAE1-SAE2 and linkage to the E2 enzyme UBE2I, and can be promoted by an E3 ligase such as PIAS1-4, RANBP2 or CBX4. This post-translational modification on lysine residues of proteins plays a crucial role in a number of cellular processes such as nuclear transport, DNA replication and repair, mitosis and signal transduction. Polymeric SUMO2 chains are also susceptible to polyubiquitination which functions as a signal for proteasomal degradation of modified proteins. Plays a role in the regulation of sumoylation status of SETX. The chain is Small ubiquitin-related modifier 2 from Bos taurus (Bovine).